Here is a 91-residue protein sequence, read N- to C-terminus: Small ribosomal subunit protein uS19 (91 aa).

It belongs to the universal ribosomal protein uS19 family.

In terms of biological role, protein S19 forms a complex with S13 that binds strongly to the 16S ribosomal RNA. This Paraburkholderia phymatum (strain DSM 17167 / CIP 108236 / LMG 21445 / STM815) (Burkholderia phymatum) protein is Small ribosomal subunit protein uS19.